We begin with the raw amino-acid sequence, 322 residues long: Ig gamma-2A chain C region (322 aa).

3 consecutive Ig-like domains span residues 6 to 98 (PSVY…KKIV), 115 to 212 (VFIF…KSIS), and 221 to 317 (PQVY…KSLS). 3 disulfides stabilise this stretch: C27-C82, C136-C196, and C242-C300. N172 carries N-linked (GlcNAc...) asparagine glycosylation.

The protein is Ig gamma-2A chain C region (Igg-2a) of Rattus norvegicus (Rat).